The chain runs to 336 residues: MEFKLLLVLCFNIGLICSQKTKPIGSKPIAVTTAAKTPATSTSPVTNGTGGPKFDLAALQKLLATFQMMQGAQGGNTAPSSSLPGVSSMPMPSANQISRKSNINANSLYQPELMNTNVPYMGNSLQQSRFQNQFLGGQFAPNVNVYRTNNHISSFEQMRLTRSYNLDEEQKFKILEEHNKFRSDVVQKRGTGAMNVLRWSEKLAAQASLEVMNCSYVNQGRGASLASVYEKYTGSSLVSEFMSRWSDEKNRFSLGENCSIQQTCRYSQAVWANTKQVGCAVQYCGDMSFIACSYSPVGNTVNQIAFSPSRGGICSACTTPPNMPVRCNSDHLCEWY.

The N-terminal stretch at 1 to 18 (MEFKLLLVLCFNIGLICS) is a signal peptide. Asparagine 47 is a glycosylation site (N-linked (GlcNAc...) asparagine). Residues 73-85 (QGGNTAPSSSLPG) are compositionally biased toward polar residues. The tract at residues 73-94 (QGGNTAPSSSLPGVSSMPMPSA) is disordered. Residues 175 to 292 (LEEHNKFRSD…YCGDMSFIAC (118 aa)) enclose the SCP domain. 2 N-linked (GlcNAc...) asparagine glycosylation sites follow: asparagine 213 and asparagine 257.

As to expression, component of the acid-insoluble and acid-soluble organic matrix of calcified layers of the shell (at protein level).

Its subcellular location is the secreted. This is SCP domain-containing protein 1 from Lottia gigantea (Giant owl limpet).